The following is a 1601-amino-acid chain: MAELVRPKKPKHRERPQSDDAPRIPDRPVMVNGMRLPVAPSHSIQHQRDRSASPEPEEQVLSDTGESINPEKENGSIQDVRSSPVRPAPPPPRAISQEREAPPIPARNLVFPRSTSMVAESTREPTPVVLPKRSVAVAPYPTVPELAELPSYTAALKHPQVYPAVDGGQLHHSRSAAAIPEKTRFSAPVAQERVREGEAPPMYPSINTYERNEHGLMTEENLVTFYHNPLYEHAEIFVDQFIKAEVVPNQSGSLFPLLARLKSVCDLMTVSEVKGKENTEELQKCLRECWVQQTMSVEAKGKCGDNNDGTGRASYFSYELQQSVLDQMKRLLSTNRTNLLDHTLCEETSFRSLALQIQWQIIIINNNFMAENGLTTNCPPSLVATGPMTPGRTAIRTALSDIFYHLRYPRLSKRFIDTLFGWIKELTCILNMRQSCDDGIFLLCHLLRLPSPIDHWAPPFVQTFIQSQSPPRLKLDYCVALLTHLLNPIKARESFLRHVAQSEKEESTWEILADDDDGEANEFSFVTINESDLTAFLDQIPISELYSIAYLAFTSYSDKGSQFTAMIAFQLLLMKILDNGLTSYSQPGYKMFCKQIGISLKHSVRELCSNWRLIRDQIRPGEEQNLQKEVDRIVLLALNYLIHRDSVGLFQFVVALPYGVVSEECRSRCEYALRSNKKMSIHEIYETPICEVRARISSQSIAKRVSSLGAQDSEFLINSLASIGSYSNGDVGQLLKELIDVCFCEPATRDDFYKCGGEAIGQILTKRPETLHQLLAIVDRNLQHMDSYAINVLSSSRLFECRLTEPMISIIGKWLINNPPEHGANRLARRVLSGLHWGLGPDGQNLWIDVDVHAIAADTVVKAHSVHCSRSNSMISKSISKISKLASKVGDAESLFQQFCWDLLVKLKLPTIPVDLVQNDLTAHYVRIVQNYEDDVVVYLEKAVPLLSDLVSSGSSVASVVLLSRLIAQHYQKVNLMAADKNFMATFERLLHIDQLPYAVQWLSGPSSTPTPIVRLICSAISYYSAKLPPRDYLRAWITLLCQARTGWNEDAVTYQIVGTIARIAFINDTQKLYEITSIVFQAYQQQMAAEKNQSKGILALFSSDSSASPLIPDSMLAVSPFASYIMLRVEQKSFNPFYGHFYETLGKKDKYNLDHAAKKAASKCSMALPVERLAVFRWAKLVIVCKDSALLPIILQQLAGQAYRLRKANNLNLCYARRLIDEPQMQGVMAECRKAIEETTVATKGLSKAVVGWLFTKHEVTRTGFDFSVFDLDYLLQLILAGDKNMWMDFVNMPHFTSEEFAERKLYSVTCQLSPKNRESPSPPELGSPRARGTAKPFPVLPVHSGLPKAPCLDPSTIFQQHVVLQMAAPFMSTVKNLAKQYTECGDRMDIYDDAYCKLIRILYQSTQQTVPVEIRCSYCSKPKPCTMTVKPNVLSPEIDVKMSQNRQKRIEFWNELNASMIDQAAVATASMEHLSRLVSMMAAALDPRNRNSVQPTGHSLFYLITSSVGENELLFSVASESYSHSLRALGEEFVKFRPEEQMDVMQLALNGFVLSEPLVEVFTAEVLNSDDLCTAYRKLSDAVRMPERSKMALQLLGEQ.

Positions 1–109 (MAELVRPKKP…EAPPIPARNL (109 aa)) are disordered. A compositionally biased stretch (basic and acidic residues) spans 15-26 (RPQSDDAPRIPD).

This sequence belongs to the EPG5 family.

Its subcellular location is the cytoplasm. Its function is as follows. Involved in autophagy. Has a role in the degradation of protein aggregates within autophagosomes. Essential for starvation-induced autotrophy and omegasome development. In Caenorhabditis briggsae, this protein is Ectopic P granules protein 5 (epg-5).